A 151-amino-acid polypeptide reads, in one-letter code: MNPENWLLLRRVVRFGDTDAAGVMHFHQLFRWCHESWEESLESYGLNPADIFPGSRKSEVTPEVALPIIHCQADFRRPIHTGDALAMELRPERLNPNSFQVHFEFRCEEQIAAHALIRHLAINAQTRHRCALPEGIDRWLEASGVGKIGSI.

Residue aspartate 19 is part of the active site.

This sequence belongs to the 4-hydroxybenzoyl-CoA thioesterase family. DHNA-CoA hydrolase subfamily.

It catalyses the reaction 1,4-dihydroxy-2-naphthoyl-CoA + H2O = 1,4-dihydroxy-2-naphthoate + CoA + H(+). It participates in cofactor biosynthesis; phylloquinone biosynthesis. It functions in the pathway quinol/quinone metabolism; 1,4-dihydroxy-2-naphthoate biosynthesis; 1,4-dihydroxy-2-naphthoate from chorismate: step 7/7. Its function is as follows. Catalyzes the hydrolysis of 1,4-dihydroxy-2-naphthoyl-CoA (DHNA-CoA) to 1,4-dihydroxy-2-naphthoate (DHNA), a reaction involved in phylloquinone (vitamin K1) biosynthesis. This chain is 1,4-dihydroxy-2-naphthoyl-CoA hydrolase, found in Prochlorococcus marinus (strain MIT 9313).